Here is a 1076-residue protein sequence, read N- to C-terminus: Bifunctional glutamine synthetase adenylyltransferase/adenylyl-removing enzyme (1076 aa).

The tract at residues 1–521 is adenylyl removase; the sequence is MESSIFKPSS…LHLDIYYRPM (521 aa). Residues 524-1076 form an adenylyl transferase region; the sequence is VNAQMENDQI…LERNRRRAQR (553 aa). Residues 1042–1056 show a composition bias toward low complexity; it reads TATASAATQQPQTAP. Residues 1042–1076 are disordered; the sequence is TATASAATQQPQTAPRPRMHVIAPRLERNRRRAQR.

The protein belongs to the GlnE family. Requires Mg(2+) as cofactor.

It carries out the reaction [glutamine synthetase]-O(4)-(5'-adenylyl)-L-tyrosine + phosphate = [glutamine synthetase]-L-tyrosine + ADP. It catalyses the reaction [glutamine synthetase]-L-tyrosine + ATP = [glutamine synthetase]-O(4)-(5'-adenylyl)-L-tyrosine + diphosphate. Its function is as follows. Involved in the regulation of glutamine synthetase GlnA, a key enzyme in the process to assimilate ammonia. When cellular nitrogen levels are high, the C-terminal adenylyl transferase (AT) inactivates GlnA by covalent transfer of an adenylyl group from ATP to specific tyrosine residue of GlnA, thus reducing its activity. Conversely, when nitrogen levels are low, the N-terminal adenylyl removase (AR) activates GlnA by removing the adenylyl group by phosphorolysis, increasing its activity. The regulatory region of GlnE binds the signal transduction protein PII (GlnB) which indicates the nitrogen status of the cell. In Bifidobacterium longum (strain NCC 2705), this protein is Bifunctional glutamine synthetase adenylyltransferase/adenylyl-removing enzyme.